Reading from the N-terminus, the 307-residue chain is Quinolinate synthase (307 aa).

Residues H20 and S37 each contribute to the iminosuccinate site. C82 is a [4Fe-4S] cluster binding site. Residues Y108–N110 and S125 each bind iminosuccinate. C168 is a [4Fe-4S] cluster binding site. Iminosuccinate is bound by residues H194–E196 and T219. C264 serves as a coordination point for [4Fe-4S] cluster.

Belongs to the quinolinate synthase family. Type 2 subfamily. It depends on [4Fe-4S] cluster as a cofactor.

Its subcellular location is the cytoplasm. It catalyses the reaction iminosuccinate + dihydroxyacetone phosphate = quinolinate + phosphate + 2 H2O + H(+). It participates in cofactor biosynthesis; NAD(+) biosynthesis; quinolinate from iminoaspartate: step 1/1. Catalyzes the condensation of iminoaspartate with dihydroxyacetone phosphate to form quinolinate. This chain is Quinolinate synthase, found in Pyrobaculum aerophilum (strain ATCC 51768 / DSM 7523 / JCM 9630 / CIP 104966 / NBRC 100827 / IM2).